The following is a 256-amino-acid chain: Sorbitol dehydrogenase (256 aa).

Residues 15 to 17, Asp36, 59 to 60, Asn86, Tyr152, Lys156, and 182 to 187 each bind NAD(+); these read RGI, DV, and PGVVDG. Residue Tyr152 is the Proton acceptor of the active site.

This sequence belongs to the short-chain dehydrogenases/reductases (SDR) family. As to quaternary structure, homodimer. May function as a tetramer in vivo.

The catalysed reaction is keto-D-fructose + NADH + H(+) = D-sorbitol + NAD(+). The enzyme catalyses galactitol + NAD(+) = keto-D-tagatose + NADH + H(+). It carries out the reaction L-iditol + NAD(+) = keto-L-sorbose + NADH + H(+). Its activity is regulated as follows. Inhibited by DTT, N-bromosuccinimide and iodoacetic acid. Catalyzes the oxidation of D-sorbitol (D-glucitol) to D-fructose. Can also catalyze the oxidation of galactitol to D-tagatose and the oxidation of L-iditol, with lower efficiency. This Cereibacter sphaeroides (Rhodobacter sphaeroides) protein is Sorbitol dehydrogenase (polS).